Reading from the N-terminus, the 164-residue chain is Protein SprT (164 aa).

The SprT-like domain occupies Gln14–Val156. His69 lines the Zn(2+) pocket. Residue Glu70 is part of the active site. His73 lines the Zn(2+) pocket.

It belongs to the SprT family. It depends on Zn(2+) as a cofactor.

The protein localises to the cytoplasm. This chain is Protein SprT, found in Pseudomonas fluorescens (strain ATCC BAA-477 / NRRL B-23932 / Pf-5).